Reading from the N-terminus, the 301-residue chain is 4-hydroxy-tetrahydrodipicolinate synthase (301 aa).

Threonine 46 provides a ligand contact to pyruvate. The active-site Proton donor/acceptor is tyrosine 134. Catalysis depends on lysine 162, which acts as the Schiff-base intermediate with substrate. Isoleucine 203 lines the pyruvate pocket.

This sequence belongs to the DapA family. In terms of assembly, homotetramer; dimer of dimers.

The protein resides in the cytoplasm. The enzyme catalyses L-aspartate 4-semialdehyde + pyruvate = (2S,4S)-4-hydroxy-2,3,4,5-tetrahydrodipicolinate + H2O + H(+). It functions in the pathway amino-acid biosynthesis; L-lysine biosynthesis via DAP pathway; (S)-tetrahydrodipicolinate from L-aspartate: step 3/4. In terms of biological role, catalyzes the condensation of (S)-aspartate-beta-semialdehyde [(S)-ASA] and pyruvate to 4-hydroxy-tetrahydrodipicolinate (HTPA). The sequence is that of 4-hydroxy-tetrahydrodipicolinate synthase from Anaplasma marginale (strain St. Maries).